The following is a 1020-amino-acid chain: C protein alpha-antigen (1020 aa).

An N-terminal signal peptide occupies residues methionine 1–valine 41. The 9 X 82 AA tandem repeats stretch occupies residues valine 227–proline 964. 16 disordered regions span residues aspartate 261–aspartate 281, proline 306–valine 330, proline 342–aspartate 363, proline 388–aspartate 445, proline 470–valine 494, proline 506–aspartate 527, proline 552–valine 576, proline 588–histidine 610, proline 634–valine 658, proline 670–histidine 692, proline 716–valine 740, proline 752–histidine 774, proline 798–valine 822, proline 834–histidine 856, proline 880–valine 904, and proline 962–alanine 989. The span at aspartate 272–aspartate 281 shows a compositional bias: basic and acidic residues. A compositionally biased stretch (polar residues) spans glycine 320–proline 329. Basic and acidic residues predominate over residues aspartate 354–aspartate 363. The span at glycine 402–proline 411 shows a compositional bias: polar residues. Over residues aspartate 436–aspartate 445 the composition is skewed to basic and acidic residues. Polar residues predominate over residues glycine 484 to proline 493. The segment covering aspartate 518–aspartate 527 has biased composition (basic and acidic residues). The segment covering glycine 566–proline 575 has biased composition (polar residues). The segment covering aspartate 600–histidine 610 has biased composition (basic and acidic residues). The segment covering glycine 648–proline 657 has biased composition (polar residues). A compositionally biased stretch (basic and acidic residues) spans aspartate 682 to histidine 692. Over residues glycine 730–proline 739 the composition is skewed to polar residues. A compositionally biased stretch (basic and acidic residues) spans aspartate 764 to histidine 774. Residues glycine 812–proline 821 show a composition bias toward polar residues. The segment covering aspartate 846–histidine 856 has biased composition (basic and acidic residues). Residues glycine 894–proline 903 are compositionally biased toward polar residues. Positions leucine 987–glycine 991 match the LPXTG sorting signal motif. Threonine 990 is modified (pentaglycyl murein peptidoglycan amidated threonine). A propeptide spans glycine 991 to aspartate 1020 (removed by sortase).

It localises to the secreted. It is found in the cell wall. May play a role in both virulence and immunity. This is C protein alpha-antigen (bca) from Streptococcus agalactiae serotype Ia (strain ATCC 27591 / A909 / CDC SS700).